The following is a 93-amino-acid chain: Acylphosphatase (93 aa).

The 88-residue stretch at 6–93 (RAIVTVKGLV…GEFDTFDVRY (88 aa)) folds into the Acylphosphatase-like domain. Active-site residues include arginine 21 and asparagine 39.

The protein belongs to the acylphosphatase family.

It catalyses the reaction an acyl phosphate + H2O = a carboxylate + phosphate + H(+). In Geobacter metallireducens (strain ATCC 53774 / DSM 7210 / GS-15), this protein is Acylphosphatase (acyP).